The chain runs to 233 residues: Protease inhibitor Egf1.0 (233 aa).

The signal sequence occupies residues 1-28 (MYIDTGIMSNNIFLFAFFALVGLTRIEA). Positions 52-104 (CRENEHYNSTRIECEEECNDRNNKLCYRFQQFCWCNEGYIRNSSHICVKLEDC) constitute a TIL domain. Residues 201 to 233 (FGKPKNSSAEKKPLETETQAQKFNGIIDQETLD) form a disordered region.

This sequence belongs to the polydnaviridae EGF-like motif protein family. As to quaternary structure, interacts with host PAP1 and PAP3.

Functionally, counteracts the host humoral immune response by inhibiting the processing and the amidolytic activity of host PAP3. Thereby, melanization of host hemolymph, normally producing several reactive intermediates toxic for viruses, is deregulated and proper immune response cannot occur. The sequence is that of Protease inhibitor Egf1.0 (O12) from Microplitis demolitor (Parasitoid wasp).